Here is an 811-residue protein sequence, read N- to C-terminus: Phenylalanine--tRNA ligase beta subunit (811 aa).

Residues 40–156 (AEKNENIVVG…EDIEVGSKVD (117 aa)) enclose the tRNA-binding domain. Positions 411–486 (KSTKEVKVPL…RIHGYDHLPY (76 aa)) constitute a B5 domain. Mg(2+)-binding residues include D464, D470, E473, and E474. Residues 717-810 (PRYPSVSRDI…VNKKFGSYVR (94 aa)) form the FDX-ACB domain.

The protein belongs to the phenylalanyl-tRNA synthetase beta subunit family. Type 1 subfamily. As to quaternary structure, tetramer of two alpha and two beta subunits. Mg(2+) is required as a cofactor.

Its subcellular location is the cytoplasm. The enzyme catalyses tRNA(Phe) + L-phenylalanine + ATP = L-phenylalanyl-tRNA(Phe) + AMP + diphosphate + H(+). The sequence is that of Phenylalanine--tRNA ligase beta subunit from Oceanobacillus iheyensis (strain DSM 14371 / CIP 107618 / JCM 11309 / KCTC 3954 / HTE831).